Here is a 251-residue protein sequence, read N- to C-terminus: Hydroxyacylglutathione hydrolase (251 aa).

The Zn(2+) site is built by H53, H55, D57, H58, H110, D127, and H165.

This sequence belongs to the metallo-beta-lactamase superfamily. Glyoxalase II family. Monomer. It depends on Zn(2+) as a cofactor.

The catalysed reaction is an S-(2-hydroxyacyl)glutathione + H2O = a 2-hydroxy carboxylate + glutathione + H(+). It functions in the pathway secondary metabolite metabolism; methylglyoxal degradation; (R)-lactate from methylglyoxal: step 2/2. Functionally, thiolesterase that catalyzes the hydrolysis of S-D-lactoyl-glutathione to form glutathione and D-lactic acid. The protein is Hydroxyacylglutathione hydrolase of Salmonella paratyphi C (strain RKS4594).